We begin with the raw amino-acid sequence, 936 residues long: Phosphoenolpyruvate carboxylase (936 aa).

Catalysis depends on residues H155 and K595.

It belongs to the PEPCase type 1 family. Homotetramer. Requires Mg(2+) as cofactor. The cofactor is Mn(2+).

It carries out the reaction oxaloacetate + phosphate = phosphoenolpyruvate + hydrogencarbonate. Exhibits positive allosteric property with acetyl-CoA and fructose 1,6-bisphosphate, and a negative one with L-aspartate and L-malate. In terms of biological role, forms oxaloacetate, a four-carbon dicarboxylic acid source for the tricarboxylic acid cycle. This chain is Phosphoenolpyruvate carboxylase (ppc), found in Rhodothermus marinus (Rhodothermus obamensis).